The primary structure comprises 317 residues: Fruit protein pKIWI502 (317 aa).

The disordered stretch occupies residues 1 to 29; the sequence is MSITLSRPSLSRPSLSRHPSLTLHSSLSH. Residues 71-182 enclose the FAD-binding FR-type domain; that stretch reads YIWTPVPISR…TQIIGRGFDI (112 aa).

The polypeptide is Fruit protein pKIWI502 (Actinidia deliciosa (Kiwi)).